A 147-amino-acid chain; its full sequence is MRLSDIKPTPGSMKKRTRVGRGIGSGKGKTSGKGHKGQKARGRGKVHPWFEGGQTPLHRRLPKFGFKNFTKKVYSVVNVEQLEKIFESGEEVTPEKLLEKGVIKKINDGVKILGNGEITKPLTVIAHAFSSSARRKIEAVGGKVEVI.

Residues 1 to 54 form a disordered region; the sequence is MRLSDIKPTPGSMKKRTRVGRGIGSGKGKTSGKGHKGQKARGRGKVHPWFEGGQ. A compositionally biased stretch (basic residues) spans 30 to 46; sequence TSGKGHKGQKARGRGKV.

The protein belongs to the universal ribosomal protein uL15 family. In terms of assembly, part of the 50S ribosomal subunit.

Binds to the 23S rRNA. In Thermosipho melanesiensis (strain DSM 12029 / CIP 104789 / BI429), this protein is Large ribosomal subunit protein uL15.